A 347-amino-acid chain; its full sequence is MIYVGGVQFLDESSSFSLSSSSQGSSLLVDVMSHPVITLASDSFKNLEEKNVSFDESDSESSTKDRYVYIFQREFAVVNPALVDFVGTDEATTCVGLVIRNRKSGMTSVAHMDSPEIVDLGISQMLLLVLQDDVDAELDVHMVGGYEDVDIKNADGVGDYAKPEGYSFPLCCKLVETLQKRRENFHIQTLFILGHNTKLDSQANTCPIFNGCLVNTSTGAILPASFNRTSRCPDEIVRRIRVSSSFEDSSWKGKLLDTYDTKTDRFIIAPCRWTMRLIEYVWELNQLTDEEILTNCSTSPSAEGPDFVNSLRRNWGYLLKYPEWSKTFPRRQPRVFERTVDGHWKKC.

The enzyme catalyses N-terminal L-asparaginyl-[protein] + H2O + H(+) = N-terminal L-aspartyl-[protein] + NH4(+). Its function is as follows. N-terminal asparagine deamidase that mediates deamidation of N-terminal asparagine residues to aspartate. Required for the ubiquitin-dependent turnover of intracellular proteins that initiate with Met-Asn. These proteins are acetylated on the retained initiator methionine and can subsequently be modified by the removal of N-acetyl methionine by acylaminoacid hydrolase (AAH). Conversion of the resulting N-terminal asparagine to aspartate by NTAN1 renders the protein susceptible to arginylation, polyubiquitination and degradation as specified by the N-end rule. This enzyme does not act on substrates with internal or C-terminal asparagines and does not act on glutamine residues in any position. Does not seem to be involved in immune response, unlike the N-terminal glutamine amidohydrolase NTAQ1. The sequence is that of Protein N-terminal asparagine amidohydrolase from Arabidopsis thaliana (Mouse-ear cress).